The chain runs to 479 residues: T-box transcription factor TBX1 (479 aa).

Low complexity-rich tracts occupy residues 15–31 (ASSL…ADPF) and 59–86 (YPFA…AAAV). Positions 15–86 (ASSLSGLGSP…GPGASRAAAV (72 aa)) are disordered. Positions 108 to 286 (LWDEFNQLGT…SNPFAKGFRD (179 aa)) form a DNA-binding region, T-box. Residues 311–398 (RNPVASPTQP…APGASEPLHH (88 aa)) are disordered. Residues 313 to 322 (PVASPTQPNG) are compositionally biased toward polar residues. Positions 323–338 (SDKDAAEARREFDRDS) are enriched in basic and acidic residues. A Nuclear localization signal motif is present at residues 415 to 426 (KSRPAPYPLPGL).

Binds DNA as a dimer. Interacts with DSCR6. Interacts with NKX2-5. As to expression, expressed in skeletal muscle, lung and testis. Highly expressed in hair follicle stem cell, but not in terminally differentiating cells.

It is found in the nucleus. Functionally, transcription factor that plays a key role in cardiovascular development by promoting pharyngeal arch segmentation during embryonic development. Also involved in craniofacial muscle development. Together with NKX2-5, acts as a regulator of asymmetric cardiac morphogenesis by promoting expression of PITX2. Acts upstream of TBX1 for the formation of the thymus and parathyroid glands from the third pharyngeal pouch. Required for hair follicle stem cell self-renewal. Binds to the palindromic T site 5'-TTCACACCTAGGTGTGAA-3' DNA sequence. The protein is T-box transcription factor TBX1 of Mus musculus (Mouse).